Consider the following 612-residue polypeptide: MGKVIGIDLGTTFSCVAVMEGGQPVVIPNAEGARTTPSVVAFTKEGERLVGQVAKRQAIVNPDRTIMSIKRHMGSDYKVKIDDKEYTPQEISAMILQKLKADAEAYLGEKVTQAVITVPAYFNDSQRQATKDAGRIAGLEVLRIINEPTAAALAYGLDKEGNQKIMVYDLGGGTFDVSILEIGEGVFEVLATSGNNHLGGDDFDQRIIDWLADNFKKEHGIDLRNDRMALQRLKDAAERAKIELSSATVTNINLPFITADATGPKHIDVNLTRAKFEELISDLVESTVGPVNQALNDAGLKPSDIDKVLLIGGSTRVPLVQETVKKIMGKEPHKGINPDEAVAIGAAIQAAVLSGEVKDILLLDVTPLSLGIETLGGVFTKIIERNTTIPTRKSQIFTTAADNQTSVEIHVLQGERPMAKDNKTLGRFILSGIPPAPRGVPQIEVTFDIDANGIVHVSAKDLGTGKSQDITITSTTNLSEEEIQRMINEAKQYEEQDRKKKEEIEIRNKADSLIYQAEKTMKDLGDKMTQAEKDEINKEIENVRKALEGSDIEAIKSASEKLSQAFYKVSTRIYQQAGGQTGGATNTDSAGQGTTQDNVYEANYKVEDDDNK.

At Thr-174 the chain carries Phosphothreonine; by autocatalysis. Residues 578–612 (GGQTGGATNTDSAGQGTTQDNVYEANYKVEDDDNK) are disordered. The segment covering 586–598 (NTDSAGQGTTQDN) has biased composition (polar residues).

The protein belongs to the heat shock protein 70 family.

In terms of biological role, acts as a chaperone. The sequence is that of Chaperone protein DnaK from Thermoanaerobacter sp. (strain X514).